A 320-amino-acid polypeptide reads, in one-letter code: Lipoyl synthase (320 aa).

The [4Fe-4S] cluster site is built by Cys-67, Cys-72, Cys-78, Cys-93, Cys-97, Cys-100, and Ser-307. One can recognise a Radical SAM core domain in the interval 79–296; sequence FNHGTATFMI…GVIAKEIGFT (218 aa).

This sequence belongs to the radical SAM superfamily. Lipoyl synthase family. The cofactor is [4Fe-4S] cluster.

The protein resides in the cytoplasm. The enzyme catalyses [[Fe-S] cluster scaffold protein carrying a second [4Fe-4S](2+) cluster] + N(6)-octanoyl-L-lysyl-[protein] + 2 oxidized [2Fe-2S]-[ferredoxin] + 2 S-adenosyl-L-methionine + 4 H(+) = [[Fe-S] cluster scaffold protein] + N(6)-[(R)-dihydrolipoyl]-L-lysyl-[protein] + 4 Fe(3+) + 2 hydrogen sulfide + 2 5'-deoxyadenosine + 2 L-methionine + 2 reduced [2Fe-2S]-[ferredoxin]. It functions in the pathway protein modification; protein lipoylation via endogenous pathway; protein N(6)-(lipoyl)lysine from octanoyl-[acyl-carrier-protein]: step 2/2. Catalyzes the radical-mediated insertion of two sulfur atoms into the C-6 and C-8 positions of the octanoyl moiety bound to the lipoyl domains of lipoate-dependent enzymes, thereby converting the octanoylated domains into lipoylated derivatives. The protein is Lipoyl synthase of Pseudoalteromonas atlantica (strain T6c / ATCC BAA-1087).